We begin with the raw amino-acid sequence, 378 residues long: Erythronate-4-phosphate dehydrogenase (378 aa).

Residues Ser-45 and Thr-66 each coordinate substrate. Positions 146 and 175 each coordinate NAD(+). Residue Arg-208 is part of the active site. Position 232 (Asp-232) interacts with NAD(+). Glu-237 is an active-site residue. Catalysis depends on His-254, which acts as the Proton donor. Residue Gly-257 coordinates NAD(+). Substrate is bound at residue Tyr-258.

Belongs to the D-isomer specific 2-hydroxyacid dehydrogenase family. PdxB subfamily. In terms of assembly, homodimer.

Its subcellular location is the cytoplasm. The catalysed reaction is 4-phospho-D-erythronate + NAD(+) = (R)-3-hydroxy-2-oxo-4-phosphooxybutanoate + NADH + H(+). It participates in cofactor biosynthesis; pyridoxine 5'-phosphate biosynthesis; pyridoxine 5'-phosphate from D-erythrose 4-phosphate: step 2/5. Functionally, catalyzes the oxidation of erythronate-4-phosphate to 3-hydroxy-2-oxo-4-phosphonooxybutanoate. The sequence is that of Erythronate-4-phosphate dehydrogenase from Escherichia coli O157:H7.